We begin with the raw amino-acid sequence, 433 residues long: 3-phosphoshikimate 1-carboxyvinyltransferase (433 aa).

3-phosphoshikimate-binding residues include Lys15, Ser16, and Arg20. Lys15 lines the phosphoenolpyruvate pocket. The phosphoenolpyruvate site is built by Gly96 and Arg124. The 3-phosphoshikimate site is built by Ser169, Gln171, Ser195, Asp318, and Lys345. Gln171 provides a ligand contact to phosphoenolpyruvate. Asp318 serves as the catalytic Proton acceptor. Residues Arg349 and Arg393 each coordinate phosphoenolpyruvate.

Belongs to the EPSP synthase family. Monomer.

The protein localises to the cytoplasm. It carries out the reaction 3-phosphoshikimate + phosphoenolpyruvate = 5-O-(1-carboxyvinyl)-3-phosphoshikimate + phosphate. It functions in the pathway metabolic intermediate biosynthesis; chorismate biosynthesis; chorismate from D-erythrose 4-phosphate and phosphoenolpyruvate: step 6/7. Functionally, catalyzes the transfer of the enolpyruvyl moiety of phosphoenolpyruvate (PEP) to the 5-hydroxyl of shikimate-3-phosphate (S3P) to produce enolpyruvyl shikimate-3-phosphate and inorganic phosphate. In Chlorobium luteolum (strain DSM 273 / BCRC 81028 / 2530) (Pelodictyon luteolum), this protein is 3-phosphoshikimate 1-carboxyvinyltransferase.